Here is a 114-residue protein sequence, read N- to C-terminus: Probable gas vesicle protein J2 (114 aa).

The segment covering methionine 1–glycine 10 has biased composition (basic and acidic residues). The disordered stretch occupies residues methionine 1–glycine 21.

Belongs to the gas vesicle GvpA family. As to quaternary structure, interacts with GvpA.

It localises to the gas vesicle. In terms of biological role, a minor component of the gas vesicle, might be involved in nucleating gas vesicle formation. Gas vesicles (GV) are hollow, gas filled proteinaceous nanostructures. It is not clear what function GVs perform in soil bacteria. The sequence is that of Probable gas vesicle protein J2 from Streptomyces coelicolor (strain ATCC BAA-471 / A3(2) / M145).